We begin with the raw amino-acid sequence, 480 residues long: Sestrin-2 (480 aa).

N-acetylmethionine is present on Met-1. The disordered stretch occupies residues 20–45 (PGGVGDSGPGEEQRESRARRGPRGPS). Residues 66 to 239 (GLEALMSSGR…APTPPSEQSS (174 aa)) form an N-terminal domain; mediates the alkylhydroperoxide reductase activity region. The Cysteine sulfenic acid (-SOH) intermediate role is filled by Cys-125. Residue Lys-175 forms a Glycyl lysine isopeptide (Lys-Gly) (interchain with G-Cter in ubiquitin) linkage. The segment at 222-252 (ADGSPAPQAPTPPSEQSSPPSRDPLNNSGGF) is disordered. Residue Ser-249 is modified to Phosphoserine. The interval 308-480 (PHPDMLCFVE…ALRAITRYMT (173 aa)) is C-terminal domain; mediates TORC1 regulation. Residues 374–377 (TYNT), Thr-386, and Glu-451 contribute to the L-leucine site.

It belongs to the sestrin family. As to quaternary structure, interacts with the GATOR2 complex which is composed of MIOS, SEC13, SEH1L, WDR24 and WDR59; the interaction is negatively regulated by leucine. Conveys leucine availability via direct interaction with SEH1L and WDR24 components of the GATOR2 complex. Interacts with RRAGA, RRAGB, RRAGC and RRAGD; may function as a guanine nucleotide dissociation inhibitor for RRAGs and regulate them. May interact with the TORC2 complex. Interacts with KEAP1, RBX1, SQSTM and ULK1; to regulate the degradation of KEAP1. May also associate with the complex composed of TSC1, TSC2 and the AMP-responsive protein kinase/AMPK to regulate TORC1 signaling. May interact with PRDX1. Phosphorylated by ULK1 at multiple sites. In terms of processing, ubiquitinated at Lys-175 by RNF167 via 'Lys-63'-linked polyubiquitination in response to leucine deprivation: ubiquitination promotes SESN2-interaction with the GATOR2 complex, leading to inhibit the TORC1 signaling pathway. Deubiquitinated at Lys-175 by STAMBPL1, promoting the TORC1 signaling pathway. Ubiquitinated by RNF186; ubiquitination mediates proteasomal degradation.

It is found in the cytoplasm. The catalysed reaction is a hydroperoxide + L-cysteinyl-[protein] = S-hydroxy-L-cysteinyl-[protein] + an alcohol. Functions as an intracellular leucine sensor that negatively regulates the mTORC1 signaling pathway through the GATOR complex. In absence of leucine, binds the GATOR subcomplex GATOR2 and prevents mTORC1 signaling. Binding of leucine to SESN2 disrupts its interaction with GATOR2 thereby activating the TORC1 signaling pathway. This stress-inducible metabolic regulator also plays a role in protection against oxidative and genotoxic stresses. May negatively regulate protein translation in response to endoplasmic reticulum stress, via mTORC1. May positively regulate the transcription by NFE2L2 of genes involved in the response to oxidative stress by facilitating the SQSTM1-mediated autophagic degradation of KEAP1. May also mediate TP53 inhibition of TORC1 signaling upon genotoxic stress. Moreover, may prevent the accumulation of reactive oxygen species (ROS) through the alkylhydroperoxide reductase activity born by the N-terminal domain of the protein. Was originally reported to contribute to oxidative stress resistance by reducing PRDX1. However, this could not be confirmed. The protein is Sestrin-2 of Pongo abelii (Sumatran orangutan).